Here is a 98-residue protein sequence, read N- to C-terminus: MDSFDAPDRYVSFKGIDCEGNSRRIIDRLHMHIDDPAKTNAFWERFRAKLAIAEDPLKRQADGLCLLCANIYYIADLFEEHDDEDGLAMLRQLEDECC.

This sequence belongs to the CowN family.

Functionally, is required to sustain N(2)-dependent growth in the presence of low levels of carbon monoxide (CO). Probably acts by protecting the N(2) fixation ability of the nitrogenase complex, which is inactivated in the presence of CO. The protein is N(2)-fixation sustaining protein CowN of Azospirillum sp. (strain B510).